Reading from the N-terminus, the 354-residue chain is 4-hydroxy-3-methylbut-2-en-1-yl diphosphate synthase (flavodoxin) (354 aa).

[4Fe-4S] cluster-binding residues include Cys262, Cys265, Cys297, and Glu304.

Belongs to the IspG family. [4Fe-4S] cluster serves as cofactor.

It carries out the reaction (2E)-4-hydroxy-3-methylbut-2-enyl diphosphate + oxidized [flavodoxin] + H2O + 2 H(+) = 2-C-methyl-D-erythritol 2,4-cyclic diphosphate + reduced [flavodoxin]. Its pathway is isoprenoid biosynthesis; isopentenyl diphosphate biosynthesis via DXP pathway; isopentenyl diphosphate from 1-deoxy-D-xylulose 5-phosphate: step 5/6. In terms of biological role, converts 2C-methyl-D-erythritol 2,4-cyclodiphosphate (ME-2,4cPP) into 1-hydroxy-2-methyl-2-(E)-butenyl 4-diphosphate. This is 4-hydroxy-3-methylbut-2-en-1-yl diphosphate synthase (flavodoxin) from Helicobacter hepaticus (strain ATCC 51449 / 3B1).